The following is a 187-amino-acid chain: Elongation factor P (187 aa).

It belongs to the elongation factor P family.

It is found in the cytoplasm. The protein operates within protein biosynthesis; polypeptide chain elongation. Functionally, involved in peptide bond synthesis. Stimulates efficient translation and peptide-bond synthesis on native or reconstituted 70S ribosomes in vitro. Probably functions indirectly by altering the affinity of the ribosome for aminoacyl-tRNA, thus increasing their reactivity as acceptors for peptidyl transferase. The sequence is that of Elongation factor P from Corynebacterium kroppenstedtii (strain DSM 44385 / JCM 11950 / CIP 105744 / CCUG 35717).